A 594-amino-acid chain; its full sequence is Sodium-dependent glucose transporter 1 (594 aa).

A run of 11 helical transmembrane segments spans residues W77–L97, L115–F137, L144–P161, A166–G186, A205–F225, I269–I289, T311–G331, A349–A371, L393–I413, I439–L459, and L467–Y487.

The protein belongs to the major facilitator superfamily.

The protein resides in the apical cell membrane. Its function is as follows. May function as a sodium-dependent glucose transporter. Potential channels for urea in the inner medulla of kidney. The protein is Sodium-dependent glucose transporter 1 (mfsd4b) of Danio rerio (Zebrafish).